Here is a 393-residue protein sequence, read N- to C-terminus: NAD(P)H-quinone oxidoreductase subunit H, chloroplastic (393 aa).

Belongs to the complex I 49 kDa subunit family. In terms of assembly, NDH is composed of at least 16 different subunits, 5 of which are encoded in the nucleus.

Its subcellular location is the plastid. It is found in the chloroplast thylakoid membrane. The enzyme catalyses a plastoquinone + NADH + (n+1) H(+)(in) = a plastoquinol + NAD(+) + n H(+)(out). The catalysed reaction is a plastoquinone + NADPH + (n+1) H(+)(in) = a plastoquinol + NADP(+) + n H(+)(out). Its function is as follows. NDH shuttles electrons from NAD(P)H:plastoquinone, via FMN and iron-sulfur (Fe-S) centers, to quinones in the photosynthetic chain and possibly in a chloroplast respiratory chain. The immediate electron acceptor for the enzyme in this species is believed to be plastoquinone. Couples the redox reaction to proton translocation, and thus conserves the redox energy in a proton gradient. The sequence is that of NAD(P)H-quinone oxidoreductase subunit H, chloroplastic from Helianthus annuus (Common sunflower).